The chain runs to 462 residues: MGFLKPTMAILFLAMVAVSSAVDMSIISYDEKHGVSTTGGRSEAEVMSIYEAWLVKHGKAQSQNSLVEKDRRFEIFKDNLRFVDEHNEKNLSYRLGLTRFADLTNDEYRSKYLGAKMEKKGERRTSLRYEARVGDELPESIDWRKKGAVAEVKDQGGCGSCWAFSTIGAVEGINQIVTGDLITLSEQELVDCDTSYNEGCNGGLMDYAFEFIIKNGGIDTDKDYPYKGVDGTCDQIRKNAKVVTIDSYEDVPTYSEESLKKAVAHQPISIAIEAGGRAFQLYDSGIFDGSCGTQLDHGVVAVGYGTENGKDYWIVRNSWGKSWGESGYLRMARNIASSSGKCGIAIEPSYPIKNGENPPNPGPSPPSPIKPPTQCDSYYTCPESNTCCCLFEYGKYCFAWGCCPLEAATCCDDNYSCCPHEYPVCDLDQGTCLLSKNSPFSVKALKRKPATPFWSQGRKNIA.

A signal peptide spans 1–21 (MGFLKPTMAILFLAMVAVSSA). Positions 22–136 (VDMSIISYDE…LRYEARVGDE (115 aa)) are cleaved as a propeptide — activation peptide. N90 carries N-linked (GlcNAc...) asparagine glycosylation. 5 disulfides stabilise this stretch: C158-C200, C192-C233, C291-C342, C375-C387, and C381-C402. Residue C161 is part of the active site. Active-site residues include H297 and N317. Positions 353–462 (KNGENPPNPG…FWSQGRKNIA (110 aa)) are cleaved as a propeptide — removed in mature form. N-linked (GlcNAc...) asparagine glycosylation occurs at N414.

This sequence belongs to the peptidase C1 family. As to quaternary structure, interacts with SERPIN1. Interacts with PRN2. Interacts with WSCP. Interacts with TZF4, TZF5 and TZF6.

It localises to the vacuole. It is found in the golgi apparatus. Its subcellular location is the cytoplasm. The protein localises to the stress granule. The protein resides in the P-body. Inhibited by the cysteine protease inhibitor E64 (L-trans-epoxysuccinyl-leucylamide-(4-guanido)-butane). Its function is as follows. Cysteine protease that plays a role in immunity, senescence, and biotic and abiotic stresses. Involved in immunity against the necrotrophic fungal pathogen Botrytis cinerea. Involved in elicitor-stimulated programmed cell death (PCD). During infection by the necrotrophic fungal pathogen Botrytis cinerea, functions as a PCD-promoting protease that is released from the ER body or vacuole to the cytoplasm. Accumulates in endoplasmic reticulum-derived bodies in epidermal cells and may participate in cell death in stressed or injured cells. Involved in water stress-induced cell death through its protease activity that is released to the cytoplasm after vacuolar collapse. Possesses protease activity in vitro and is involved in cell death in the transmitting tract and septum epidermis during flower development. Possesses peptide ligase activity. Can ligate peptides to unmodified N-termini of acceptor proteins. Probably ligates through a thioester intermediate. This chain is Cysteine proteinase RD21A, found in Arabidopsis thaliana (Mouse-ear cress).